Consider the following 258-residue polypeptide: Indole-3-glycerol phosphate synthase (258 aa).

The protein belongs to the TrpC family.

The enzyme catalyses 1-(2-carboxyphenylamino)-1-deoxy-D-ribulose 5-phosphate + H(+) = (1S,2R)-1-C-(indol-3-yl)glycerol 3-phosphate + CO2 + H2O. It participates in amino-acid biosynthesis; L-tryptophan biosynthesis; L-tryptophan from chorismate: step 4/5. This chain is Indole-3-glycerol phosphate synthase, found in Nautilia profundicola (strain ATCC BAA-1463 / DSM 18972 / AmH).